Consider the following 476-residue polypeptide: Cysteine--tRNA ligase (476 aa).

Zn(2+) is bound at residue C27. The 'HIGH' region signature appears at 29–39; that stretch reads ITPYDSVHVGH. 3 residues coordinate Zn(2+): C213, H238, and E242. Residues 271 to 275 carry the 'KMSKS' region motif; that stretch reads KMSKS. K274 contacts ATP.

It belongs to the class-I aminoacyl-tRNA synthetase family. The cofactor is Zn(2+).

Its subcellular location is the cytoplasm. It catalyses the reaction tRNA(Cys) + L-cysteine + ATP = L-cysteinyl-tRNA(Cys) + AMP + diphosphate. The protein is Cysteine--tRNA ligase of Pyrobaculum arsenaticum (strain DSM 13514 / JCM 11321 / PZ6).